Consider the following 158-residue polypeptide: Phosphopantetheine adenylyltransferase (158 aa).

Serine 9 lines the substrate pocket. ATP-binding positions include 9-10 (SF) and histidine 17. Positions 41, 73, and 87 each coordinate substrate. Residues 88–90 (GLR), glutamate 98, and 122–128 (YSFVSSS) contribute to the ATP site.

The protein belongs to the bacterial CoaD family. Homohexamer. Mg(2+) is required as a cofactor.

The protein resides in the cytoplasm. The catalysed reaction is (R)-4'-phosphopantetheine + ATP + H(+) = 3'-dephospho-CoA + diphosphate. It functions in the pathway cofactor biosynthesis; coenzyme A biosynthesis; CoA from (R)-pantothenate: step 4/5. In terms of biological role, reversibly transfers an adenylyl group from ATP to 4'-phosphopantetheine, yielding dephospho-CoA (dPCoA) and pyrophosphate. This chain is Phosphopantetheine adenylyltransferase, found in Mycolicibacterium smegmatis (strain ATCC 700084 / mc(2)155) (Mycobacterium smegmatis).